The sequence spans 391 residues: Phosphoglycerate kinase (391 aa).

Residues 21–23 (DLN), Arg36, 59–62 (HLGR), Arg113, and Arg146 contribute to the substrate site. Residues Lys197, Glu319, and 345–348 (GGDT) contribute to the ATP site.

The protein belongs to the phosphoglycerate kinase family. In terms of assembly, monomer.

The protein localises to the cytoplasm. The enzyme catalyses (2R)-3-phosphoglycerate + ATP = (2R)-3-phospho-glyceroyl phosphate + ADP. It participates in carbohydrate degradation; glycolysis; pyruvate from D-glyceraldehyde 3-phosphate: step 2/5. In Pseudoalteromonas translucida (strain TAC 125), this protein is Phosphoglycerate kinase.